Here is a 591-residue protein sequence, read N- to C-terminus: MRLFAHLAVLAILACAVPITAIPSFLSNSYPAHPAEGISLFPQTQPQAPLGLWTRLRNTVIERLWRVPPQLCKNRPGHKGKFPLFPAPASLRARYGDDVVLRFTIRNAEEVKALAEASNILFLDVWASTDEWVDIRLSKDVVPSLLGLLPKSLQTSHIPLIHDLPQTIYESYPSSSQRSSYDVQGFSPSTKHSSDKTNIFFQDYQPFSVIVPWMRLLTSMFSSRVQMINIGSTFEGRDIPALQIGVWPANNPKPRKTVVVSGGSHAREWISVSTVNYVAYSLITNYAKSKHVAELLQQFDFIFIPTLNPDGYIYTWEVDRIWRKNRQDTSLPFCPGVDLDRTWGFKWDGNITADNPCSESYPGEDPFAGIEAKQFSQWAKNQTAQNNTEFVAFIDLHSYSQQIRYPYSYSCQPDPPNLENLEELAIGIAKAIRLTNRETYEVSSACEGLMASQAKVKSDDPFPRIERTGGSALDWFYHDLNVKYSYQIKLRDRGSYGFLLPRENIVPTGQEMFNAVMVLGRFLSGHDGFGPLDWEDESQRPKAGEDDIPSDNELDENDDSWIPYDYRNHDDQNEGEGYDNDEWGFRRRRKR.

Residues 1-21 form the signal peptide; sequence MRLFAHLAVLAILACAVPITA. The propeptide occupies 22 to 175; it reads IPSFLSNSYP…QTIYESYPSS (154 aa). In terms of domain architecture, Peptidase M14 spans 203–523; it reads DYQPFSVIVP…NAVMVLGRFL (321 aa). 2 residues coordinate Zn(2+): His265 and Glu268. Residues 265-268, Arg323, and 340-341 each bind substrate; these read HARE and DR. Cysteines 334 and 357 form a disulfide. Residues Asn350, Asn381, and Asn386 are each glycosylated (N-linked (GlcNAc...) asparagine). His397 provides a ligand contact to Zn(2+). 398-399 contributes to the substrate binding site; it reads SY. The tract at residues 533 to 591 is disordered; it reads DWEDESQRPKAGEDDIPSDNELDENDDSWIPYDYRNHDDQNEGEGYDNDEWGFRRRRKR. Acidic residues-rich tracts occupy residues 546-559 and 573-582; these read DDIP…ENDD and NEGEGYDNDE.

This sequence belongs to the peptidase M14 family. The cofactor is Zn(2+).

It is found in the vacuole. The protein localises to the secreted. Inactive carboxypeptidase that may play a role in cell wall organization and biogenesis. This chain is Inactive metallocarboxypeptidase ECM14 (ECM14), found in Paracoccidioides brasiliensis (strain Pb03).